We begin with the raw amino-acid sequence, 508 residues long: Drug efflux pump JefA (508 aa).

14 helical membrane-spanning segments follow: residues 9–29 (VLAT…VNVA), 46–66 (WAVA…ALLG), 75–95 (FVFG…PVSL), 104–124 (IQGL…SHSF), 136–156 (NWMA…GLMV), 163–183 (SVFL…LVGV), 194–214 (LDWV…YTII), 222–242 (QSAG…WLFV), 265–285 (SVLI…MVIT), 297–317 (LHAG…SLLA), 328–348 (LPVL…AISM), 354–374 (VALV…TPLL), 399–419 (LGGI…LGAA), and 479–499 (GIKL…VLGW).

It belongs to the major facilitator superfamily.

It localises to the cell inner membrane. In terms of biological role, involved in resistance to ethambutol and isoniazid. The protein is Drug efflux pump JefA of Mycobacterium tuberculosis (strain CDC 1551 / Oshkosh).